The following is a 328-amino-acid chain: Phenylalanine--tRNA ligase alpha subunit (328 aa).

E245 is a binding site for Mg(2+).

This sequence belongs to the class-II aminoacyl-tRNA synthetase family. Phe-tRNA synthetase alpha subunit type 1 subfamily. As to quaternary structure, tetramer of two alpha and two beta subunits. Mg(2+) serves as cofactor.

It localises to the cytoplasm. It catalyses the reaction tRNA(Phe) + L-phenylalanine + ATP = L-phenylalanyl-tRNA(Phe) + AMP + diphosphate + H(+). The protein is Phenylalanine--tRNA ligase alpha subunit of Helicobacter pylori (strain P12).